Reading from the N-terminus, the 842-residue chain is CRM-domain containing factor CFM3, chloroplastic/mitochondrial (842 aa).

The transit peptide at 1–82 (MAMASSPACH…RSSGRSTMSL (82 aa)) directs the protein to the chloroplast and mitochondrion. Disordered stretches follow at residues 49–80 (AALD…RSTM), 141–160 (RFPW…SARS), and 254–290 (VDYD…LPTE). Positions 167–263 (LTLPAAELRR…VDYDEPEPTK (97 aa)) constitute a CRM 1 domain. Over residues 280 to 290 (GSSNPSLLPTE) the composition is skewed to polar residues. CRM domains lie at 371–468 (PSLS…ELAE) and 582–682 (ETIT…SSLR). Residues 703 to 732 (QALSRHFAKLNRKVERLKAELVQMEDVKEQ) are a coiled coil. The interval 768 to 842 (VAGATADDDG…DRRNHDVNEY (75 aa)) is disordered. Residues 786-812 (DEADYPDSDDEAGDCSEDEGEDDEDEA) are compositionally biased toward acidic residues. Residues 831 to 842 (DTDRRNHDVNEY) are compositionally biased toward basic and acidic residues.

Interacts with RNA. Part of large ribonucleo-protein particles that contain CAF1 and/or CAF2, and RNC1.

It is found in the plastid. The protein resides in the chloroplast stroma. It localises to the mitochondrion. Functionally, binds specific group II introns in chloroplasts and facilitates their splicing. Acts on subgroup IIB introns. The substrates of the subgroup IIB also require the CRM domain proteins CAF1 or CAF2, with a simultaneous binding of CFM3 and CAF1 or CAF2. May influence the biogenesis of the mitochondrial small ribosomal subunit. The sequence is that of CRM-domain containing factor CFM3, chloroplastic/mitochondrial from Zea mays (Maize).